Consider the following 181-residue polypeptide: ADP-ribosylation factor 1-like 2 (181 aa).

G2 is lipidated: N-myristoyl glycine. The important for the stable binding to the membranes stretch occupies residues 3–16; sequence NVFGSLFKGLFGKK. GTP contacts are provided by residues 24–32, 126–129, and A160; these read GLDAAGKTT and NKQD.

The protein belongs to the small GTPase superfamily. Arf family.

Its subcellular location is the golgi apparatus membrane. The enzyme catalyses GTP + H2O = GDP + phosphate + H(+). Alternates between an inactive GDP-bound form and an active GTP-bound form. Activated by a guanine nucleotide-exchange factor (GEF) and inactivated by GTPase-activating protein (GAP). Its function is as follows. Small GTPase involved in protein trafficking between different compartments. Modulates vesicle budding and uncoating within the Golgi complex. In its GTP-bound form, triggers the recruitment of coatomer proteins to the Golgi membrane. The hydrolysis of ARF1-bound GTP, which is mediated by ARFGAPs proteins, is required for dissociation of coat proteins from Golgi membranes and vesicles. Involved in endoplasmic reticulum dynamics during embryogenesis. Also required for adult germline function. Plays a role in cell shedding during embryogenesis probably by promoting the endocytosis of cell adhesion molecules. During neurogenesis, involved in cell autonomous Q.p neuroblast asymmetric divisions that generate one precursor cell and one apoptotic cell, probably by controlling endocytosis. Plays a role in maintaining mitochondrial morphology. The sequence is that of ADP-ribosylation factor 1-like 2 (arf-1.2) from Caenorhabditis briggsae.